An 852-amino-acid polypeptide reads, in one-letter code: Lon protease homolog 2, peroxisomal (852 aa).

S2 carries the post-translational modification N-acetylserine. Residues 13-222 (LPLLLTHEGV…MTIPLLVRQI (210 aa)) form the Lon N-terminal domain. An ATP-binding site is contributed by 375-382 (GPPGVGKT). The Lon proteolytic domain occupies 651–837 (LSQPGVAIGL…DEVLNAAFDG (187 aa)). Active-site residues include S743 and K786. The Microbody targeting signal motif lies at 850–852 (SKL).

Belongs to the peptidase S16 family. As to quaternary structure, interacts with PEX5. Interacts with TYSND1. May interact with enzymes involved in beta-oxidation of fatty acids, including ACOX1/AOX. In terms of tissue distribution, widely expressed, with high levels in the liver, kidney and pancreas.

The protein resides in the peroxisome matrix. It catalyses the reaction Hydrolysis of proteins in presence of ATP.. Its function is as follows. ATP-dependent serine protease that mediates the selective degradation of misfolded and unassembled polypeptides in the peroxisomal matrix. Necessary for type 2 peroxisome targeting signal (PTS2)-containing protein processing and facilitates peroxisome matrix protein import. May indirectly regulate peroxisomal fatty acid beta-oxidation through degradation of the self-processed forms of TYSND1. This Homo sapiens (Human) protein is Lon protease homolog 2, peroxisomal.